The primary structure comprises 427 residues: Acyltransferase fer5 (427 aa).

Positions 1-24 (MTAATSVQPSPAPRQPGLRATFNP) are disordered. His342 is a substrate binding site. Residue Glu380 is the Proton acceptor of the active site.

The protein belongs to the lysine N-acyltransferase mbtK family.

Its pathway is siderophore biosynthesis. Functionally, acyltransferase; part of the gene cluster that mediates the biosynthesis of siderophore ferrichrome A which is contributing to organismal virulence. The first step of ferrichrome A biosynthesis is performed by the HMG-CoA synthase hcs1 which catalyzes the generation of HMG-CoA and CoA using acetoacetyl-CoA and acetyl-CoA as substrates. The enoyl-CoA isomerase/hydratase fer4 then catalyzes the conversion of hcs1-produced HMG-CoA to methylglutaconyl-CoA. The acyltransferase fer5 then fuses the fer4-generated methylglutaconyl-CoA with sid1-generated hydroxyornithine to yield methylglutaconyl hydroxyornithine. Methylglutaconyl hydroxyornithine is then available for use by the NRPS fer3 to generate ferrichrome A. In Mycosarcoma maydis (Corn smut fungus), this protein is Acyltransferase fer5.